The following is an 85-amino-acid chain: U4-theraphotoxin-Hhn1a (85 aa).

An N-terminal signal peptide occupies residues 1–22; sequence MKVTLIAILTCAAVLVLHTTAE. Positions 23 to 48 are excised as a propeptide; sequence EELEAESQLMEVGMPDTELAAVDEER. Cystine bridges form between cysteine 52–cysteine 66, cysteine 56–cysteine 77, and cysteine 71–cysteine 82.

The protein belongs to the neurotoxin 12 (Hwtx-2) family. 02 (Hwtx-2) subfamily. In terms of assembly, monomer. As to expression, expressed by the venom gland.

The protein resides in the secreted. Its function is as follows. Neurotoxin active on both insects and mammals. This is U4-theraphotoxin-Hhn1a from Cyriopagopus hainanus (Chinese bird spider).